Here is a 1175-residue protein sequence, read N- to C-terminus: Tyrosine-protein phosphatase non-receptor type 21 (1175 aa).

Residues 23–308 (LVARIQLLNN…ARHKFYRLNQ (286 aa)) form the FERM domain. Residues 395–421 (YSAHSTNSLNTPQPYLQPSPMSSNPSI) show a composition bias toward polar residues. The segment at 395–445 (YSAHSTNSLNTPQPYLQPSPMSSNPSIPGSDVMRPDYIPSHRHSALIPPSY) is disordered. 10 positions are modified to phosphoserine: Ser577, Ser589, Ser590, Ser637, Ser673, Ser710, Ser711, Ser798, Ser800, and Ser805. Residues 663 to 702 (DVAPRTFSAGSQSSVFSDKVKQEGTEEQGSGGYSHKKSLS) are disordered. Residues 897–1168 (VFTEYERILK…TFVYRVLIQF (272 aa)) enclose the Tyrosine-protein phosphatase domain. Residues Glu1068, 1109-1115 (CSAGVGR), and Gln1153 contribute to the substrate site. The active-site Phosphocysteine intermediate is Cys1109.

This sequence belongs to the protein-tyrosine phosphatase family. Non-receptor class subfamily. In terms of tissue distribution, particularly abundantly in adrenal glands.

The protein resides in the cytoplasm. Its subcellular location is the cytoskeleton. The catalysed reaction is O-phospho-L-tyrosyl-[protein] + H2O = L-tyrosyl-[protein] + phosphate. This chain is Tyrosine-protein phosphatase non-receptor type 21 (Ptpn21), found in Rattus norvegicus (Rat).